The chain runs to 1209 residues: MKFSKEIEVFNPPLASSASSGPWVHSVFAFTHSWPRKTLFKRDSAVTHRLYGDISRDFQGTSENGVIFQKCAVVSVQSEWPSAHVRLFVNNTRTPTAANLSDLFLLDNITGLTIRESAGNQTSRGFQAFRKKFLQVGDSFSVSYTASLEARDVGSGDILLLPAQLSFQSSSPNRTQLKAPFTITAEEKITVLPNHGLHAAGFCVAFILSLVLTWAVLFFMVRYQCVKGSSLTRHQVQHHENKLEHSQFTSADGVNEDLALNDQMIDILSSEDPGSMLQALEELEIATLNRADSDLEACRTQISKDIIALLLKNLTSSGQLSPQVERRMGAVFKKQFLLLEKEIQEEYDRKMVALTAECDLETRKKTESQYQREMAAMEEAEEVLKRVSERSAVECSSLLRTLHGLEQEHLRRSLALQQEEDLAKAHRQLAIFQRNELHNIFFTQIKSAIFKGELKPEAAKMLLQDYSKIQESVEELMDFFQASKRYHLSKRFGHREYLVQNIQSSETRMQGLLSTASAQLTLLIQKHERAGYLDEDQMQVLLERAQTEVFSIKQKLDNDLKQEKKKLHQKLIIKRRREMLQKHKEQRREQLSIAEASGAAEDAGQYLGQWRGLMAEHSAALEELQERLDQAALDELRALTLSLSEKATEELRRLQNSGMTQELLKRGVPWLFLQQILEEHSRDLAARAERLEGEERDRGQEGVQSVRQRLKDDALEASTEEQAELRHWEHLIFTKLCSSAFSLSEEELLGMRQEVHGCFAQMDRSLALPKIRARVLLQRFQTAWREAEFLKLDQAMTAPELQPQSKARKPRSKSRSKIDLLKKCTEDKIQLFKEQAPEDLVEKVRGELLRERVQQLEAQEGLFAESLVSLQFQKAARMARTLWAYTALLSIQDLLLEELNSSETLTKSACMQILESHSPELQELERKLEDQLAHQEAAQLQRALDSWQQWAGEGPALLQEPEETDSERHVSAVLQRALSKGQKLLEYHQQSLREEQEDSVVLEDLLENMETDTFVTLYGQELRLASYLSKLTMLPGGTLRRLLTVALPAASQAELLAVLDSVGQKHQDHSVENDGSRVQADLGRRGKHQGWWQALESKLRGELINRGLEKMLWAQKRKESILKKTCPPLRERVIFSGKRSWPHLSLESTDELTPVPIVGAEAVDLLNTGEKLFIFRNPKEPEISLHVPPRKKKKNFLNAKKAAWALGLN.

The Extracellular segment spans residues 1-200 (MKFSKEIEVF…VLPNHGLHAA (200 aa)). An N-linked (GlcNAc...) asparagine glycan is attached at Asn120. Residues 201 to 221 (GFCVAFILSLVLTWAVLFFMV) form a helical membrane-spanning segment. The Cytoplasmic portion of the chain corresponds to 222-1209 (RYQCVKGSSL…KKAAWALGLN (988 aa)). Coiled-coil stretches lie at residues 355–394 (TAEC…SAVE), 553–697 (KQKL…EERD), and 920–1012 (ELQE…METD). Basic and acidic residues predominate over residues 689 to 700 (ERLEGEERDRGQ). A disordered region spans residues 689–714 (ERLEGEERDRGQEGVQSVRQRLKDDA).

In terms of assembly, component of the EvC complex composed of EFCAB7, IQCE, EVC2 and EVC; built from two subcomplexes, EVC2:EVC and EFCAB7:IQCE. Interacts with EVC. Interacts (via N-terminal end) with EFCAB7. Interacts (via N-terminal end) with IQCE.

The protein localises to the cell membrane. It localises to the cytoplasm. The protein resides in the cytoskeleton. It is found in the cilium basal body. Its subcellular location is the cell projection. The protein localises to the cilium. It localises to the cilium membrane. The protein resides in the nucleus. Functionally, component of the EvC complex that positively regulates ciliary Hedgehog (Hh) signaling. Plays a critical role in bone formation and skeletal development. May be involved in early embryonic morphogenesis. This Bos taurus (Bovine) protein is Limbin (EVC2).